Here is a 545-residue protein sequence, read N- to C-terminus: Indole-3-pyruvate decarboxylase (545 aa).

E48 provides a ligand contact to thiamine diphosphate. The thiamine pyrophosphate binding stretch occupies residues D382–E460. Residues D429 and N456 each coordinate Mg(2+).

It belongs to the TPP enzyme family. A metal cation serves as cofactor. It depends on thiamine diphosphate as a cofactor.

The catalysed reaction is indole-3-pyruvate + H(+) = indole-3-acetaldehyde + CO2. It participates in plant hormone metabolism; auxin biosynthesis. This is Indole-3-pyruvate decarboxylase (ipdC) from Azospirillum brasilense.